We begin with the raw amino-acid sequence, 431 residues long: Synaptotagmin-11 (431 aa).

The Vesicular portion of the chain corresponds to 1–15; the sequence is MAEITNIRPSFDVSP. The helical transmembrane segment at 16–36 threads the bilayer; that stretch reads VVAGLIGASVLVVCVSVTVFV. Over 37–431 the chain is Cytoplasmic; sequence WSCCHQQAEK…VAKWHSLSEY (395 aa). Phosphoserine is present on serine 134. Positions 134–154 are disordered; the sequence is SPITSLTPGESKTTSPSSPEE. Low complexity predominate over residues 140–151; sequence TPGESKTTSPSS. C2 domains are found at residues 157-279 and 291-426; these read MLGS…QLTR and SRGE…AKWH. Positions 250, 253, and 256 each coordinate Ca(2+).

It belongs to the synaptotagmin family. Homodimer. Can also form heterodimers. Interacts with PRKN. Interacts (via C2 2 domain) with AGO2 and SND1; the interaction with SND1 is direct. Interacts with KIF1A; the interaction increases in presence of calcium. Requires Ca(2+) as cofactor. Post-translationally, ubiquitinated, at least by PRKN, and targeted to the proteasome complex for degradation. Ubiquitination is inhibited by ATP13A2.

It is found in the cytoplasmic vesicle membrane. It localises to the perikaryon. Its subcellular location is the golgi apparatus. The protein resides in the trans-Golgi network membrane. The protein localises to the recycling endosome membrane. It is found in the lysosome membrane. It localises to the cytoplasmic vesicle. Its subcellular location is the phagosome. The protein resides in the cell projection. The protein localises to the axon. It is found in the dendrite. It localises to the postsynaptic density. Its subcellular location is the clathrin-coated vesicle membrane. Its function is as follows. Synaptotagmin family member involved in vesicular and membrane trafficking which does not bind Ca(2+). Inhibits clathrin-mediated and bulk endocytosis, functions to ensure precision in vesicle retrieval. Plays an important role in dopamine transmission by regulating endocytosis and the vesicle-recycling process. Essential component of a neuronal vesicular trafficking pathway that differs from the synaptic vesicle trafficking pathway but is crucial for development and synaptic plasticity. In macrophages and microglia, inhibits the conventional cytokine secretion, of at least IL6 and TNF, and phagocytosis. In astrocytes, regulates lysosome exocytosis, mechanism required for the repair of injured astrocyte cell membrane. Required for the ATP13A2-mediated regulation of the autophagy-lysosome pathway. The protein is Synaptotagmin-11 of Homo sapiens (Human).